The primary structure comprises 382 residues: Mannitol-1-phosphate 5-dehydrogenase (382 aa).

Alanine 3–glycine 14 provides a ligand contact to NAD(+).

It belongs to the mannitol dehydrogenase family.

It carries out the reaction D-mannitol 1-phosphate + NAD(+) = beta-D-fructose 6-phosphate + NADH + H(+). This Klebsiella pneumoniae protein is Mannitol-1-phosphate 5-dehydrogenase (mtlD).